We begin with the raw amino-acid sequence, 198 residues long: Na(+)-translocating NADH-quinone reductase subunit E (198 aa).

6 helical membrane-spanning segments follow: residues 11-31 (AVFV…FLAV), 35-55 (VSTA…SVPV), 77-97 (FLNF…LEMI), 110-130 (GIFL…SFMV), 140-160 (VVYG…MAGI), and 176-196 (LGIT…FSGV).

This sequence belongs to the NqrDE/RnfAE family. In terms of assembly, composed of six subunits; NqrA, NqrB, NqrC, NqrD, NqrE and NqrF.

The protein localises to the cell inner membrane. It carries out the reaction a ubiquinone + n Na(+)(in) + NADH + H(+) = a ubiquinol + n Na(+)(out) + NAD(+). In terms of biological role, NQR complex catalyzes the reduction of ubiquinone-1 to ubiquinol by two successive reactions, coupled with the transport of Na(+) ions from the cytoplasm to the periplasm. NqrA to NqrE are probably involved in the second step, the conversion of ubisemiquinone to ubiquinol. The protein is Na(+)-translocating NADH-quinone reductase subunit E of Serratia proteamaculans (strain 568).